The following is a 389-amino-acid chain: Nicotinate phosphoribosyltransferase (389 aa).

Histidine 216 is subject to Phosphohistidine; by autocatalysis.

The protein belongs to the NAPRTase family. Transiently phosphorylated on a His residue during the reaction cycle. Phosphorylation strongly increases the affinity for substrates and increases the rate of nicotinate D-ribonucleotide production. Dephosphorylation regenerates the low-affinity form of the enzyme, leading to product release.

It carries out the reaction nicotinate + 5-phospho-alpha-D-ribose 1-diphosphate + ATP + H2O = nicotinate beta-D-ribonucleotide + ADP + phosphate + diphosphate. The protein operates within cofactor biosynthesis; NAD(+) biosynthesis; nicotinate D-ribonucleotide from nicotinate: step 1/1. Functionally, catalyzes the synthesis of beta-nicotinate D-ribonucleotide from nicotinate and 5-phospho-D-ribose 1-phosphate at the expense of ATP. This is Nicotinate phosphoribosyltransferase from Ralstonia pickettii (strain 12J).